Reading from the N-terminus, the 118-residue chain is MSITSLKNQKEFELINKLGKKLHERYFILVIATKLPKIFLESKYNTFLGIKVSRKLNKKAVVRNKIKRRIRHLIRIIVSDSSFKAIKFAMIIIPRKGFEEINFSHLNYELSKVILRNI.

It belongs to the RnpA family. Consists of a catalytic RNA component (M1 or rnpB) and a protein subunit.

The enzyme catalyses Endonucleolytic cleavage of RNA, removing 5'-extranucleotides from tRNA precursor.. RNaseP catalyzes the removal of the 5'-leader sequence from pre-tRNA to produce the mature 5'-terminus. It can also cleave other RNA substrates such as 4.5S RNA. The protein component plays an auxiliary but essential role in vivo by binding to the 5'-leader sequence and broadening the substrate specificity of the ribozyme. This is Ribonuclease P protein component from Rickettsia conorii (strain ATCC VR-613 / Malish 7).